We begin with the raw amino-acid sequence, 273 residues long: NAD-dependent protein deacylase (273 aa).

Residues 20–272 (RERLRQRIFF…PEFVEKLLKG (253 aa)) form the Deacetylase sirtuin-type domain. 48–67 (GAGISAESGIRTFRAADGLW) contacts NAD(+). Residues Y92 and R95 each coordinate substrate. An NAD(+)-binding site is contributed by 129–132 (QNID). Residue H147 is the Proton acceptor of the active site. Residues C155 and C174 each coordinate Zn(2+). NAD(+)-binding positions include 214-216 (GTS), 240-242 (NLE), and A258.

It belongs to the sirtuin family. Class III subfamily. The cofactor is Zn(2+).

The protein resides in the cytoplasm. It carries out the reaction N(6)-acetyl-L-lysyl-[protein] + NAD(+) + H2O = 2''-O-acetyl-ADP-D-ribose + nicotinamide + L-lysyl-[protein]. The enzyme catalyses N(6)-succinyl-L-lysyl-[protein] + NAD(+) + H2O = 2''-O-succinyl-ADP-D-ribose + nicotinamide + L-lysyl-[protein]. It catalyses the reaction N(6)-(2-hydroxyisobutanoyl)-L-lysyl-[protein] + NAD(+) + H2O = 2''-O-(2-hydroxyisobutanoyl)-ADP-D-ribose + nicotinamide + L-lysyl-[protein]. In terms of biological role, NAD-dependent lysine deacetylase that specifically removes acetyl groups on target proteins. Also acts as a protein-lysine deacylase by mediating protein desuccinylation and de-2-hydroxyisobutyrylation. Modulates the activities of several proteins which are inactive in their acylated form. This Escherichia coli O157:H7 protein is NAD-dependent protein deacylase.